The following is a 397-amino-acid chain: Torsin-3A (397 aa).

An N-terminal signal peptide occupies residues 1 to 25 (MLRGPWRQLWLFFLLLLPGAPEPRG). The N-linked (GlcNAc...) asparagine glycan is linked to Asn122. Residue 167 to 174 (GWSGTGKN) coordinates ATP.

It belongs to the ClpA/ClpB family. Torsin subfamily. May not form homohexamers. N-glycosylated. Ubiquitously expressed. Highest expression in stomach, salivary glands and lymph nodes. Isoform 2 is expressed in placenta.

It localises to the cytoplasm. The protein localises to the endoplasmic reticulum lumen. The protein is Torsin-3A (TOR3A) of Homo sapiens (Human).